The following is a 352-amino-acid chain: Holliday junction branch migration complex subunit RuvB (352 aa).

A large ATPase domain (RuvB-L) region spans residues 4–191; that stretch reads TDKFSAPDRV…FGIVARLEFY (188 aa). Residues Leu-30, Arg-31, Gly-72, Lys-75, Thr-76, Thr-77, 138-140, Arg-181, Tyr-191, and Arg-228 contribute to the ATP site; that span reads EDY. A Mg(2+)-binding site is contributed by Thr-76. The tract at residues 192 to 262 is small ATPAse domain (RuvB-S); the sequence is TAEELARIVT…IADAALAMLD (71 aa). Positions 265-352 are head domain (RuvB-H); it reads RVGFDLMDRK…GDSGDLIDGE (88 aa). The DNA site is built by Arg-301, Arg-320, and Arg-325.

The protein belongs to the RuvB family. Homohexamer. Forms an RuvA(8)-RuvB(12)-Holliday junction (HJ) complex. HJ DNA is sandwiched between 2 RuvA tetramers; dsDNA enters through RuvA and exits via RuvB. An RuvB hexamer assembles on each DNA strand where it exits the tetramer. Each RuvB hexamer is contacted by two RuvA subunits (via domain III) on 2 adjacent RuvB subunits; this complex drives branch migration. In the full resolvosome a probable DNA-RuvA(4)-RuvB(12)-RuvC(2) complex forms which resolves the HJ.

Its subcellular location is the cytoplasm. It carries out the reaction ATP + H2O = ADP + phosphate + H(+). The RuvA-RuvB-RuvC complex processes Holliday junction (HJ) DNA during genetic recombination and DNA repair, while the RuvA-RuvB complex plays an important role in the rescue of blocked DNA replication forks via replication fork reversal (RFR). RuvA specifically binds to HJ cruciform DNA, conferring on it an open structure. The RuvB hexamer acts as an ATP-dependent pump, pulling dsDNA into and through the RuvAB complex. RuvB forms 2 homohexamers on either side of HJ DNA bound by 1 or 2 RuvA tetramers; 4 subunits per hexamer contact DNA at a time. Coordinated motions by a converter formed by DNA-disengaged RuvB subunits stimulates ATP hydrolysis and nucleotide exchange. Immobilization of the converter enables RuvB to convert the ATP-contained energy into a lever motion, pulling 2 nucleotides of DNA out of the RuvA tetramer per ATP hydrolyzed, thus driving DNA branch migration. The RuvB motors rotate together with the DNA substrate, which together with the progressing nucleotide cycle form the mechanistic basis for DNA recombination by continuous HJ branch migration. Branch migration allows RuvC to scan DNA until it finds its consensus sequence, where it cleaves and resolves cruciform DNA. In Cupriavidus pinatubonensis (strain JMP 134 / LMG 1197) (Cupriavidus necator (strain JMP 134)), this protein is Holliday junction branch migration complex subunit RuvB.